The chain runs to 327 residues: Aldo-keto reductase FVEG_12638 (327 aa).

Aspartate 51 is an NADP(+) binding site. Catalysis depends on tyrosine 56, which acts as the Proton donor. Residue histidine 122 coordinates substrate. NADP(+) is bound by residues 152-153, 202-212, and 286-294; these read SE, GPLGHGWLVED, and ENFTSRDIE.

Belongs to the aldo/keto reductase family. Aldo/keto reductase 2 subfamily.

Its function is as follows. Aldo-keto reductase; part of the Fusarium detoxification of benzoxazolinone cluster 2 (FDB2) involved in the degradation of benzoxazolinones produced by the host plant. Maize, wheat, and rye produce the 2 benzoxazinone phytoanticipins 2,4-dihy-droxy-7-methoxy-1,4-benzoxazin-3-one (DIMBOA) and 2,4-dihydroxy-1,4-benzoxazin-3-one (DIBOA) that, due to their inherent instability once released, spontaneously degrade to the more stable corresponding benzoxazolinones, 6-methoxy-2-benzoxazolinone (MBOA) and 2-benzoxazolinone (BOA), respectively. The first step in the detoxification of benzoxazolinones involves the hydrolysis of the cyclic ester bond of benzoxazolinones by the FDB1 cluster gamma-lactamase MBL1 to aminophenols. MBL1 is able to convert BOA into 2-aminophenol (2-AP), as well as MBOA into 5-methoxy-2-aminophenol (2-AMP). The FDB2 cluster N-malonyltransferase FDB2/NAT1 then metabolizes aminophenols via N-malonylation to non-toxic malonamic acids. FDB2/NAT1 converts 2-AP into N-(2-hydroxyphenyl) malonamic acid (HPMA) and 2-AMP into N-(2-hydroxy-4-methoxyphenyl) malonamic acid (HMPMA). The duplicated dienlactone hydrolases DLH1 and DLH2 may provide redundant function for hydrolyzing the lactone moiety in the BOA molecule. The roles of the amidases an other enzymes encoded by the 2 FDB clusters have not been identified so far. The polypeptide is Aldo-keto reductase FVEG_12638 (Gibberella moniliformis (strain M3125 / FGSC 7600) (Maize ear and stalk rot fungus)).